Reading from the N-terminus, the 457-residue chain is Argininosuccinate lyase (457 aa).

Belongs to the lyase 1 family. Argininosuccinate lyase subfamily.

It localises to the cytoplasm. The enzyme catalyses 2-(N(omega)-L-arginino)succinate = fumarate + L-arginine. Its pathway is amino-acid biosynthesis; L-arginine biosynthesis; L-arginine from L-ornithine and carbamoyl phosphate: step 3/3. The protein is Argininosuccinate lyase of Salmonella arizonae (strain ATCC BAA-731 / CDC346-86 / RSK2980).